Consider the following 276-residue polypeptide: Short-chain dehydrogenase/reductase ATR10 (276 aa).

The NADP(+) site is built by I29, S51, D78, and N105. The active-site Proton donor is S161. K185 and T214 together coordinate NADP(+). The active-site Lowers pKa of active site Tyr is K185.

It belongs to the short-chain dehydrogenases/reductases (SDR) family.

It functions in the pathway mycotoxin biosynthesis. Functionally, short-chain dehydrogenase/reductase; part of the core atranone cluster (CAC) which products are predicted to catalyze most or all steps of mycotoxin atranone synthesis, starting from geranylgeranyl pyrophosphate (GGPP). The initial cyclization of GGPP to dolabellane is probably performed by the terpene cyclase ATR13. The Baeyer-Villiger oxidation near the end of the atranone synthesis, which converts atranones D and E to atranones F and G is predicted to be catalyzed by the monooxygenase ATR8. Of the CAC's other predicted gene products, the reducing PKS ATR6 might synthesize a polyketide chain. This polyketide is probably transferred onto the atranone backbone by the polyketide transferase ATR5. Other predicted CAC products include 4 oxygenases (ATR2, ATR3, ATR4, and ATR14), 3 short-chain reductases (ATR7, ATR9, and ATR10), and a methyltransferase (ATR12). These may all be involved in the various steps of atranone biosynthesis, although their specific roles must await experimental determination. This is Short-chain dehydrogenase/reductase ATR10 from Stachybotrys chlorohalonatus (strain IBT 40285).